A 487-amino-acid chain; its full sequence is Argininosuccinate lyase (487 aa).

The protein belongs to the lyase 1 family. Argininosuccinate lyase subfamily.

The protein resides in the cytoplasm. It carries out the reaction 2-(N(omega)-L-arginino)succinate = fumarate + L-arginine. It participates in amino-acid biosynthesis; L-arginine biosynthesis; L-arginine from L-ornithine and carbamoyl phosphate: step 3/3. The protein is Argininosuccinate lyase of Natranaerobius thermophilus (strain ATCC BAA-1301 / DSM 18059 / JW/NM-WN-LF).